We begin with the raw amino-acid sequence, 1298 residues long: Phosphoribosylformylglycinamidine synthase (1298 aa).

The disordered stretch occupies residues 301 to 328; the sequence is APFPGASTGSGGEIRDEGATGRGAKPKA. Residues 305 to 316, 384 to 386, and Ala676 contribute to the ATP site; these read GASTGSGGEIRD and TGY. Residues Asp677, Glu716, Asn720, and Asp884 each contribute to the Mg(2+) site. Ser886 is an ATP binding site. A Glutamine amidotransferase type-1 domain is found at 1045–1298; that stretch reads VAVLREQGVN…MFRNARVWVN (254 aa). The active-site Nucleophile is Cys1138. Active-site residues include His1263 and Glu1265.

In the N-terminal section; belongs to the FGAMS family. In terms of assembly, monomer.

The protein resides in the cytoplasm. The enzyme catalyses N(2)-formyl-N(1)-(5-phospho-beta-D-ribosyl)glycinamide + L-glutamine + ATP + H2O = 2-formamido-N(1)-(5-O-phospho-beta-D-ribosyl)acetamidine + L-glutamate + ADP + phosphate + H(+). Its pathway is purine metabolism; IMP biosynthesis via de novo pathway; 5-amino-1-(5-phospho-D-ribosyl)imidazole from N(2)-formyl-N(1)-(5-phospho-D-ribosyl)glycinamide: step 1/2. Its function is as follows. Phosphoribosylformylglycinamidine synthase involved in the purines biosynthetic pathway. Catalyzes the ATP-dependent conversion of formylglycinamide ribonucleotide (FGAR) and glutamine to yield formylglycinamidine ribonucleotide (FGAM) and glutamate. The sequence is that of Phosphoribosylformylglycinamidine synthase from Pseudomonas fluorescens (strain Pf0-1).